We begin with the raw amino-acid sequence, 446 residues long: Tubulin beta-6 chain (446 aa).

The MREI motif signature appears at 1 to 4 (MREI). The GTP site is built by Gln-11, Glu-69, Ser-138, Gly-142, Thr-143, and Gly-144. Residue Glu-69 participates in Mg(2+) binding. Ser-172 carries the post-translational modification Phosphoserine; by CDK1. 2 residues coordinate GTP: Asn-204 and Asn-226. The residue at position 438 (Glu-438) is a 5-glutamyl polyglutamate.

The protein belongs to the tubulin family. In terms of assembly, dimer of alpha and beta chains. A typical microtubule is a hollow water-filled tube with an outer diameter of 25 nm and an inner diameter of 15 nM. Alpha-beta heterodimers associate head-to-tail to form protofilaments running lengthwise along the microtubule wall with the beta-tubulin subunit facing the microtubule plus end conferring a structural polarity. Microtubules usually have 13 protofilaments but different protofilament numbers can be found in some organisms and specialized cells. Requires Mg(2+) as cofactor. Post-translationally, some glutamate residues at the C-terminus are polyglycylated, resulting in polyglycine chains on the gamma-carboxyl group. Glycylation is mainly limited to tubulin incorporated into axonemes (cilia and flagella) whereas glutamylation is prevalent in neuronal cells, centrioles, axonemes, and the mitotic spindle. Both modifications can coexist on the same protein on adjacent residues, and lowering polyglycylation levels increases polyglutamylation, and reciprocally. Cilia and flagella glycylation is required for their stability and maintenance. Flagella glycylation controls sperm motility. Some glutamate residues at the C-terminus are polyglutamylated, resulting in polyglutamate chains on the gamma-carboxyl group. Polyglutamylation plays a key role in microtubule severing by spastin (SPAST). SPAST preferentially recognizes and acts on microtubules decorated with short polyglutamate tails: severing activity by SPAST increases as the number of glutamates per tubulin rises from one to eight, but decreases beyond this glutamylation threshold. Glutamylation is also involved in cilia motility. In terms of processing, phosphorylated on Ser-172 by CDK1 during the cell cycle, from metaphase to telophase, but not in interphase. This phosphorylation inhibits tubulin incorporation into microtubules.

Its subcellular location is the cytoplasm. The protein localises to the cytoskeleton. Its function is as follows. Tubulin is the major constituent of microtubules, a cylinder consisting of laterally associated linear protofilaments composed of alpha- and beta-tubulin heterodimers. Microtubules grow by the addition of GTP-tubulin dimers to the microtubule end, where a stabilizing cap forms. Below the cap, tubulin dimers are in GDP-bound state, owing to GTPase activity of alpha-tubulin. The protein is Tubulin beta-6 chain (TUBB6) of Bos taurus (Bovine).